Here is a 305-residue protein sequence, read N- to C-terminus: MAAGLARLLLLLGLSAGGPAPAGAAKMKVVEEPNAFGVNNPFLPQASRLQAKRDPSPVSGPVHLFRLSGKCFSLVESTYKYEFCPFHNVTQHEQTFRWNAYSGILGIWHEWEIANNTFTGMWMRDGDACRSRSRQSKVELACGKSNRLAHVSEPSTCVYALTFETPLVCHPHALLVYPTLPEALQRQWDQVEQDLADELITPQGHEKLLRTLFEDAGYLKTPEENEPTQLEGGPDSLGFETLENCRKAHKELSKEIKRLKGLLTQHGIPYTRPTETSNLEHLGHETPRAKSPEQLRGDPGLRGSL.

Positions 1–24 (MAAGLARLLLLLGLSAGGPAPAGA) are cleaved as a signal peptide. The MRH domain maps to 69-171 (GKCFSLVEST…TFETPLVCHP (103 aa)). An intrachain disulfide couples C71 to C84. Residues N88 and N115 are each glycosylated (N-linked (GlcNAc...) asparagine). Disulfide bonds link C129–C157 and C142–C169. The DMAP1-binding domain occupies 176-279 (VYPTLPEALQ…YTRPTETSNL (104 aa)). The segment at 267–305 (GIPYTRPTETSNLEHLGHETPRAKSPEQLRGDPGLRGSL) is disordered. Over residues 281 to 296 (HLGHETPRAKSPEQLR) the composition is skewed to basic and acidic residues.

As to quaternary structure, homodimer; disulfide-linked. Hexamer of two alpha (GNPTAB), two beta (GNPTAB) and two gamma (GNPTG) subunits; disulfide-linked. The alpha and/or the beta subunits of the enzyme constitute the catalytic subunits. Cys-245 mediates the formation of the interchain disulfide bond for formation of the homodimer. Cys-142, Cys-157 and Cys-169 are involved in intramolecular disulfide bonds formation. As to expression, widely expressed.

The protein localises to the secreted. It is found in the golgi apparatus. Non-catalytic subunit of the N-acetylglucosamine-1-phosphotransferase complex, an enzyme that catalyzes the formation of mannose 6-phosphate (M6P) markers on high mannose type oligosaccharides in the Golgi apparatus. Binds and presents the high mannose glycans of the acceptor to the catalytic alpha and beta subunits (GNPTAB). Enhances the rate of N-acetylglucosamine-1-phosphate transfer to the oligosaccharides of acid hydrolase acceptors. The chain is N-acetylglucosamine-1-phosphotransferase subunit gamma (GNPTG) from Homo sapiens (Human).